Here is a 156-residue protein sequence, read N- to C-terminus: 6,7-dimethyl-8-ribityllumazine synthase (156 aa).

Residues Phe23, 57-59, and 81-83 each bind 5-amino-6-(D-ribitylamino)uracil; these read AFE and AVI. 86-87 lines the (2S)-2-hydroxy-3-oxobutyl phosphate pocket; sequence ST. His89 (proton donor) is an active-site residue. Phe114 contacts 5-amino-6-(D-ribitylamino)uracil. Arg128 is a binding site for (2S)-2-hydroxy-3-oxobutyl phosphate.

Belongs to the DMRL synthase family.

The catalysed reaction is (2S)-2-hydroxy-3-oxobutyl phosphate + 5-amino-6-(D-ribitylamino)uracil = 6,7-dimethyl-8-(1-D-ribityl)lumazine + phosphate + 2 H2O + H(+). It functions in the pathway cofactor biosynthesis; riboflavin biosynthesis; riboflavin from 2-hydroxy-3-oxobutyl phosphate and 5-amino-6-(D-ribitylamino)uracil: step 1/2. Its function is as follows. Catalyzes the formation of 6,7-dimethyl-8-ribityllumazine by condensation of 5-amino-6-(D-ribitylamino)uracil with 3,4-dihydroxy-2-butanone 4-phosphate. This is the penultimate step in the biosynthesis of riboflavin. This is 6,7-dimethyl-8-ribityllumazine synthase from Campylobacter lari (strain RM2100 / D67 / ATCC BAA-1060).